Consider the following 283-residue polypeptide: Coiled-coil domain-containing protein 42 homolog (283 aa).

Coiled-coil stretches lie at residues 31 to 139 (ATQL…LQRY) and 174 to 204 (QDLR…HRVS).

This sequence belongs to the CFAP73 family.

This is Coiled-coil domain-containing protein 42 homolog from Monosiga brevicollis (Choanoflagellate).